We begin with the raw amino-acid sequence, 373 residues long: Innexin shaking-B (373 aa).

Topologically, residues 1-21 (MLDIFRGLKSLVKISHVNTDS) are cytoplasmic. The chain crosses the membrane as a helical span at residues 22-42 (PVFRLHYSITVIILMSFSLIV). The Extracellular portion of the chain corresponds to 43 to 106 (TTRQYVGNPI…SAEATAADKK (64 aa)). Residues 107 to 127 (IYKYYQWVCFCLFFQAILFYT) form a helical membrane-spanning segment. Topologically, residues 128–176 (PRWLWKSWEGGKIHALMMDLDIGICSEIEKKQKKKLLLDYLWDNLRYHN) are cytoplasmic. Residues 177–199 (WWAYRYYVCEFLSLCNVIGQMFL) form a helical membrane-spanning segment. The Extracellular segment spans residues 200 to 268 (MNRFFDGEFM…ILPLNVVNEK (69 aa)). The chain crosses the membrane as a helical span at residues 269–289 (IYIFLWFWFIILTILTTLTIF). Residues 290-373 (YRIIIIFSPR…PGMKGEIQDA (84 aa)) are Cytoplasmic-facing.

Belongs to the pannexin family. In terms of assembly, monomer.

The protein resides in the cell membrane. It is found in the cell junction. It localises to the gap junction. Its function is as follows. Structural component of the gap junctions at electrical synapses in distal and mid-depth levels in the lamina. The protein is Innexin shaking-B of Anopheles gambiae (African malaria mosquito).